Reading from the N-terminus, the 238-residue chain is Photosynthetic NDH subunit of lumenal location 1, chloroplastic (238 aa).

The protein belongs to the PsbP family. Part of the chloroplast NDH complex, composed of a mixture of chloroplast and nucleus encoded subunits. Component of the NDH lumenal subcomplex, at least composed of PnsL1, PnsL2, PnsL3, PnsL4 and PnsL5.

The protein localises to the plastid. Its subcellular location is the chloroplast thylakoid membrane. Functionally, NDH shuttles electrons from NAD(P)H:plastoquinone, via FMN and iron-sulfur (Fe-S) centers, to quinones in the photosynthetic chain and possibly in a chloroplast respiratory chain. The immediate electron acceptor for the enzyme in this species is believed to be plastoquinone. Couples the redox reaction to proton translocation, and thus conserves the redox energy in a proton gradient. Required for accumulation of the chloroplast NAD(P)H dehydrogenase (NDH) complex. The polypeptide is Photosynthetic NDH subunit of lumenal location 1, chloroplastic (Arabidopsis thaliana (Mouse-ear cress)).